The sequence spans 206 residues: Transmembrane emp24 domain-containing protein bai (206 aa).

The first 20 residues, 1–20 (MMKAILATLAIFGCIWPGQS), serve as a signal peptide directing secretion. Over 21–172 (VMFHLTPNTQ…RDTNEKTNSR (152 aa)) the chain is Lumenal. In terms of domain architecture, GOLD spans 30-140 (QKCLKEDIQA…LKPLEVDLKR (111 aa)). Residues 173–193 (VLFFSIFSMCCLLGLATWQVL) form a helical membrane-spanning segment. Residues 194-206 (YLRRYFKAKKLIE) are Cytoplasmic-facing.

This sequence belongs to the EMP24/GP25L family.

It localises to the membrane. Its function is as follows. Eca and bai are essential, though not redundant, for dorsoventral patterning of the embryo. Specifically required during early embryogenesis for the activity of maternal tkv, while the zygotic tkv is not affected. This Drosophila willistoni (Fruit fly) protein is Transmembrane emp24 domain-containing protein bai.